The chain runs to 118 residues: Putative pterin-4-alpha-carbinolamine dehydratase (118 aa).

Belongs to the pterin-4-alpha-carbinolamine dehydratase family.

It carries out the reaction (4aS,6R)-4a-hydroxy-L-erythro-5,6,7,8-tetrahydrobiopterin = (6R)-L-erythro-6,7-dihydrobiopterin + H2O. This chain is Putative pterin-4-alpha-carbinolamine dehydratase, found in Xanthomonas campestris pv. campestris (strain 8004).